The chain runs to 231 residues: Homeobox protein EMX1 (231 aa).

Positions 133 to 192 (PKRIRTAFSPSQLLRLERAFEKNHYVVGAERKQLANSLSLSETQVKVWFQNRRTKYKRQK) form a DNA-binding region, homeobox. Residues 193 to 231 (LEEEGPECTQKKKGNHHINRWRIATKQTGSEDIDVMSDA) form a disordered region. The span at 203–212 (KKKGNHHINR) shows a compositional bias: basic residues.

This sequence belongs to the EMX homeobox family.

The protein resides in the nucleus. May function in combinations with OTX1/2 to specify cell fates in the developing central nervous system. This Danio rerio (Zebrafish) protein is Homeobox protein EMX1 (emx1).